Reading from the N-terminus, the 123-residue chain is Large ribosomal subunit protein bL19 (123 aa).

It belongs to the bacterial ribosomal protein bL19 family.

In terms of biological role, this protein is located at the 30S-50S ribosomal subunit interface and may play a role in the structure and function of the aminoacyl-tRNA binding site. The protein is Large ribosomal subunit protein bL19 of Ruegeria sp. (strain TM1040) (Silicibacter sp.).